Consider the following 245-residue polypeptide: Ribosomal RNA small subunit methyltransferase G (245 aa).

Residues glycine 85, phenylalanine 90, 108 to 110, 136 to 137, and arginine 155 each bind S-adenosyl-L-methionine; these read DST and AE.

This sequence belongs to the methyltransferase superfamily. RNA methyltransferase RsmG family.

It is found in the cytoplasm. Specifically methylates the N7 position of a guanine in 16S rRNA. In Nostoc sp. (strain PCC 7120 / SAG 25.82 / UTEX 2576), this protein is Ribosomal RNA small subunit methyltransferase G.